The following is a 124-amino-acid chain: Galanin peptides (124 aa).

Positions 1–19 (MARGSVILLGWLLLVVTLS) are cleaved as a signal peptide. Residues 20–30 (ATLGLGMPAKE) constitute a propeptide that is removed on maturation. The residue at position 61 (Thr61) is a Threonine amide. Ser117 and Ser118 each carry phosphoserine.

Belongs to the galanin family. In terms of tissue distribution, expressed in retinal progenitor cells and retinal ganglion cells (at protein level).

The protein resides in the secreted. Its function is as follows. Endocrine hormone of the central and peripheral nervous systems that binds and activates the G protein-coupled receptors GALR1, GALR2, and GALR3. This small neuropeptide may regulate diverse physiologic functions including contraction of smooth muscle of the gastrointestinal and genitourinary tract, growth hormone and insulin release and adrenal secretion. In Mus musculus (Mouse), this protein is Galanin peptides (Gal).